Consider the following 358-residue polypeptide: Leukotriene B4 receptor 2 (358 aa).

The Extracellular portion of the chain corresponds to 1–24 (MSVCYRPPGNETLLSWKTSRATGT). N10 is a glycosylation site (N-linked (GlcNAc...) asparagine). A helical transmembrane segment spans residues 25–45 (AFLLLAALLGLPGNGFVVWSL). Topologically, residues 46-60 (AGWRPARGRPLAATL) are cytoplasmic. The helical transmembrane segment at 61-81 (VLHLALADGAVLLLTPLFVAF) threads the bilayer. Residues 82–96 (LTRQAWPLGQAGCKA) lie on the Extracellular side of the membrane. The chain crosses the membrane as a helical span at residues 97 to 117 (VYYVCALSMYASVLLTGLLSL). Residues 118–140 (QRCLAVTRPFLAPRLRSPALARR) lie on the Cytoplasmic side of the membrane. The chain crosses the membrane as a helical span at residues 141–161 (LLLAVWLAALLLAVPAAVYRH). The Extracellular segment spans residues 162–185 (LWRDRVCQLCHPSPVHAAAHLSLE). The helical transmembrane segment at 186–206 (TLTAFVLPFGLMLGCYSVTLA) threads the bilayer. The Cytoplasmic portion of the chain corresponds to 207–224 (RLRGARWGSGRHGARVGR). Residues 225-245 (LVSAIVLAFGLLWAPYHAVNL) form a helical membrane-spanning segment. At 246-275 (LQAVAALAPPEGALAKLGGAGQAARAGTTA) the chain is on the extracellular side. Residues 276–296 (LAFFSSSVNPVLYVFTAGDLL) traverse the membrane as a helical segment. At 297-358 (PRAGPRFLTR…MEKDGPEWDL (62 aa)) the chain is on the cytoplasmic side. The segment at 311-358 (SGEARGGGRSREGTMELRTTPQLKVVGQGRGNGDPGGGMEKDGPEWDL) is disordered. The segment covering 338–348 (QGRGNGDPGGG) has biased composition (gly residues). A compositionally biased stretch (basic and acidic residues) spans 349-358 (MEKDGPEWDL).

Belongs to the G-protein coupled receptor 1 family. In terms of tissue distribution, widely expressed.

It is found in the cell membrane. Its function is as follows. Low-affinity receptor for leukotrienes including leukotriene B4. Mediates chemotaxis of granulocytes and macrophages. The response is mediated via G-proteins that activate a phosphatidylinositol-calcium second messenger system. The rank order of affinities for the leukotrienes is LTB4 &gt; 12-epi-LTB4 &gt; LTB5 &gt; LTB3. This chain is Leukotriene B4 receptor 2 (LTB4R2), found in Homo sapiens (Human).